The sequence spans 742 residues: Tegument protein UL47 (742 aa).

Over residues 1 to 10 (MDAARDGRPE) the composition is skewed to basic and acidic residues. Disordered regions lie at residues 1-128 (MDAA…TAHL) and 155-199 (EFPP…DDAA). The Nuclear localization signal signature appears at 10 to 30 (ERRPRRSGTYRTHPFQRPSAR). Residues 18–37 (TYRTHPFQRPSARRSLLDAL) are compositionally biased toward low complexity. Over residues 38–62 (RAADAEAAERPRVRRPRPDFQRPPD) the composition is skewed to basic and acidic residues. Positions 63–88 (EDTSEDENVYDYIDGDSSDSADDYDS) are enriched in acidic residues. The short motif at 95 to 122 (RGPNHGAGDAMDTDAPPERAPEGGAPQD) is the Nuclear export signal element. Residues 485–495 (LSAYLTLFVAL) carry the Nuclear export signal motif.

This sequence belongs to the alphaherpesvirinae HHV-1 UL47 family. As to quaternary structure, interacts with US3 kinase. Interacts with UL31 and UL34; these interactions seem important for efficient virion nuclear egress. Interacts with UL41/VHS. Phosphorylated by US3. This phosphorylation is required for proper nuclear localization.

It localises to the virion tegument. The protein resides in the host nucleus. It is found in the host cytoplasm. Tegument protein that can bind to various RNA transcripts. Plays a role in the attenuation of selective viral and cellular mRNA degradation by modulating the activity of host shutoff RNase UL41/VHS. Also plays a role in the primary envelopment of virions in the perinuclear space, probably by interacting with two nuclear egress proteins UL31 and UL34. This Bos taurus (Bovine) protein is Tegument protein UL47.